Consider the following 341-residue polypeptide: UDP-3-O-(3-hydroxymyristoyl)glucosamine N-acyltransferase (341 aa).

The Proton acceptor role is filled by His239.

This sequence belongs to the transferase hexapeptide repeat family. LpxD subfamily. Homotrimer.

It catalyses the reaction a UDP-3-O-[(3R)-3-hydroxyacyl]-alpha-D-glucosamine + a (3R)-hydroxyacyl-[ACP] = a UDP-2-N,3-O-bis[(3R)-3-hydroxyacyl]-alpha-D-glucosamine + holo-[ACP] + H(+). It carries out the reaction UDP-3-O-[(3R)-3-hydroxytetradecanoyl]-alpha-D-glucosamine + (3R)-hydroxytetradecanoyl-[ACP] = UDP-2-N,3-O-bis[(3R)-3-hydroxytetradecanoyl]-alpha-D-glucosamine + holo-[ACP] + H(+). Its pathway is glycolipid biosynthesis; lipid IV(A) biosynthesis; lipid IV(A) from (3R)-3-hydroxytetradecanoyl-[acyl-carrier-protein] and UDP-N-acetyl-alpha-D-glucosamine: step 3/6. In terms of biological role, catalyzes the N-acylation of UDP-3-O-(hydroxytetradecanoyl)glucosamine using 3-hydroxytetradecanoyl-ACP as the acyl donor. Is involved in the biosynthesis of lipid A, a phosphorylated glycolipid that anchors the lipopolysaccharide to the outer membrane of the cell. The sequence is that of UDP-3-O-(3-hydroxymyristoyl)glucosamine N-acyltransferase from Salmonella choleraesuis (strain SC-B67).